Here is a 210-residue protein sequence, read N- to C-terminus: Nucleoside triphosphate pyrophosphatase (210 aa).

The active-site Proton acceptor is the Asp80.

Belongs to the Maf family. It depends on a divalent metal cation as a cofactor.

The protein resides in the cytoplasm. The catalysed reaction is a ribonucleoside 5'-triphosphate + H2O = a ribonucleoside 5'-phosphate + diphosphate + H(+). The enzyme catalyses a 2'-deoxyribonucleoside 5'-triphosphate + H2O = a 2'-deoxyribonucleoside 5'-phosphate + diphosphate + H(+). In terms of biological role, nucleoside triphosphate pyrophosphatase. May have a dual role in cell division arrest and in preventing the incorporation of modified nucleotides into cellular nucleic acids. In Mycobacterium sp. (strain JLS), this protein is Nucleoside triphosphate pyrophosphatase.